The primary structure comprises 55 residues: Cop-6 protein (55 aa).

Belongs to the transcriptional regulatory CopG/NikR family.

Functionally, acts in trans as a negative regulatory element in pE194 replication. The protein is Cop-6 protein of Staphylococcus aureus.